A 142-amino-acid polypeptide reads, in one-letter code: Large ribosomal subunit protein mL43 (142 aa).

This sequence belongs to the mitochondrion-specific ribosomal protein mL43 family. As to quaternary structure, component of the mitochondrial large ribosomal subunit. Mature mitochondrial ribosomes consist of a small (37S) and a large (54S) subunit. The 37S subunit contains at least 33 different proteins and 1 molecule of RNA (15S). The 54S subunit contains at least 45 different proteins and 1 molecule of RNA (21S).

It is found in the mitochondrion. The protein is Large ribosomal subunit protein mL43 (MRPL51) of Eremothecium gossypii (strain ATCC 10895 / CBS 109.51 / FGSC 9923 / NRRL Y-1056) (Yeast).